Reading from the N-terminus, the 409-residue chain is Phospholipase ABHD3 (409 aa).

The helical; Signal-anchor for type II membrane protein transmembrane segment at 26-46 (GFFGSGVGLSLILGFSVAYAF) threads the bilayer. Residues 140–233 (PTILLLPGLT…MLLLNYLGKI (94 aa)) form the AB hydrolase-1 domain. Catalysis depends on charge relay system residues Ser-220, Asp-346, and His-375.

Belongs to the AB hydrolase superfamily. AB hydrolase 4 family.

It localises to the membrane. It carries out the reaction a 1,2-diacyl-sn-glycero-3-phosphocholine + H2O = a 1-acyl-sn-glycero-3-phosphocholine + a fatty acid + H(+). It catalyses the reaction a 1,2-diacyl-sn-glycero-3-phosphocholine + H2O = a 2-acyl-sn-glycero-3-phosphocholine + a fatty acid + H(+). The enzyme catalyses 1-tetradecanoyl-2-(9Z,12Z-octadecadienoyl)-sn-glycero-3-phosphocholine + H2O = 2-(9Z,12Z-octadecadienoyl)-sn-glycero-3-phosphocholine + tetradecanoate + H(+). The catalysed reaction is 1-tetradecanoyl-2-(9Z,12Z-octadecadienoyl)-sn-glycero-3-phosphocholine + H2O = 1-tetradecanoyl-sn-glycero-3-phosphocholine + (9Z,12Z)-octadecadienoate + H(+). It carries out the reaction 1-tetradecanoyl-2-(5Z,8Z,11Z,14Z-eicosatetraenoyl)-sn-glycero-3-phosphocholine + H2O = 2-(5Z,8Z,11Z,14Z)-eicosatetraenoyl-sn-glycero-3-phosphocholine + tetradecanoate + H(+). It catalyses the reaction 1-tetradecanoyl-2-(4Z,7Z,10Z,13Z,16Z,19Z-docosahexaenoyl)-sn-glycero-3-phosphocholine + H2O = 2-(4Z,7Z,10Z,13Z,16Z,19Z-docosahexaenoyl)-sn-glycero-3-phosphocholine + tetradecanoate + H(+). The enzyme catalyses 1,2-ditetradecanoyl-sn-glycero-3-phosphocholine + H2O = 2-tetradecanoyl-sn-glycero-3-phosphocholine + tetradecanoate + H(+). The catalysed reaction is 1-octadecanoyl-2-acetyl-sn-glycero-3-phosphocholine + H2O = 1-octadecanoyl-sn-glycero-3-phosphocholine + acetate + H(+). It carries out the reaction 1,2-ditetradecanoyl-sn-glycero-3-phosphocholine + H2O = 1-tetradecanoyl-sn-glycero-3-phosphocholine + tetradecanoate + H(+). It catalyses the reaction 1-octadecanoyl-2-pentanoyl-sn-glycero-3-phosphocholine + H2O = pentanoate + 1-octadecanoyl-sn-glycero-3-phosphocholine + H(+). The enzyme catalyses 1-octadecanoyl-2-hexanoyl-sn-glycero-3-phosphocholine + H2O = hexanoate + 1-octadecanoyl-sn-glycero-3-phosphocholine + H(+). The catalysed reaction is 1-octadecanoyl-2-octanoyl-sn-glycero-3-phosphocholine + H2O = 1-octadecanoyl-sn-glycero-3-phosphocholine + octanoate + H(+). It carries out the reaction 1-octadecanoyl-2-nonanoyl-sn-glycero-3-phosphocholine + H2O = nonanoate + 1-octadecanoyl-sn-glycero-3-phosphocholine + H(+). It catalyses the reaction 1-O-hexadecyl-2-nonadioyl-sn-glycero-3-phosphocholine + H2O = nonanedioate + 1-O-hexadecyl-sn-glycero-3-phosphocholine + H(+). The enzyme catalyses 1-hexadecanoyl-2-nonadioyl-sn-glycero-3-phosphocholine + H2O = nonanedioate + 1-hexadecanoyl-sn-glycero-3-phosphocholine + H(+). The catalysed reaction is 1-hexadecanoyl-2-(9-oxononanoyl)-sn-glycero-3-phosphocholine + H2O = 9-oxononanoate + 1-hexadecanoyl-sn-glycero-3-phosphocholine + H(+). It carries out the reaction 1-hexadecanoyl-2-(5-oxopentanoyl)-sn-glycero-3-phosphocholine + H2O = 5-oxopentanoate + 1-hexadecanoyl-sn-glycero-3-phosphocholine + H(+). It catalyses the reaction 1-hexadecanoyl-2-glutaroyl-sn-glycero-3-phosphocholine + H2O = glutarate + 1-hexadecanoyl-sn-glycero-3-phosphocholine + H(+). The enzyme catalyses 1-O-hexadecyl-2-acetyl-sn-glycero-3-phosphocholine + H2O = 1-O-hexadecyl-sn-glycero-3-phosphocholine + acetate + H(+). Functionally, phospholipase that may play a role in phospholipids remodeling. May selectively cleave myristate (C14)-containing phosphatidylcholines through its predominant phospholipase 1 activity, cleaving preferentially acyl groups in sn1 position. In parallel, may have a minor phospholipase 2 activity acting on acyl groups in position sn2. In addition to (C14)-containing phosphatidylcholines, may also act on other medium-chain-containing and oxidatively truncated phospholipids. The protein is Phospholipase ABHD3 of Homo sapiens (Human).